The following is a 93-amino-acid chain: Co-chaperonin GroES (93 aa).

It belongs to the GroES chaperonin family. In terms of assembly, heptamer of 7 subunits arranged in a ring. Interacts with the chaperonin GroEL.

The protein localises to the cytoplasm. In terms of biological role, together with the chaperonin GroEL, plays an essential role in assisting protein folding. The GroEL-GroES system forms a nano-cage that allows encapsulation of the non-native substrate proteins and provides a physical environment optimized to promote and accelerate protein folding. GroES binds to the apical surface of the GroEL ring, thereby capping the opening of the GroEL channel. This Lacticaseibacillus paracasei (strain ATCC 334 / BCRC 17002 / CCUG 31169 / CIP 107868 / KCTC 3260 / NRRL B-441) (Lactobacillus paracasei) protein is Co-chaperonin GroES.